Consider the following 1332-residue polypeptide: MNQFVTNTKNVIRGKYHPEFLQNEVLADIFAHTAQTLPDKTALIEADKTLSYGELYQQALIMAQHLALKGVKPGHIVGLWLPRGIELLKAQLAICLSGAAWLPFDMDTPADRIAVCLEDAEAVGMITTDEWYEHLAEVPQTKWTNTELQKPLSESVSLAKTTPDQPAYIIYTSGSTGKPKGIVITQKNICHFLRSENSILGIQEQDKVYQGFSVAFDMSFEEIWLSYLVGATLWIAPKSLVSDPERLCQTLKQEQITVLHAVPTLLALFPEDVPNLRIINLGGEMCPDSLVDRWALPHHQMFNTYGPTETTVSASLELLERGKPVTIGKPLPNYGMLVINSERELLEQGETGELCIFGPSVAQGYLGRPDLTADKFIENPWAMSVEEELLYRTGDLAKIDEFGQVHCLGRADDQVKIRGFRVELGEIEAALCDIDGIGTAAVILRPEDGIDQLIAFIAPEIDAKQAIEIKELRHNLSQRLPPYMVPNRFEIIEEVPRLLSGKIDRKALKARPLTSVVDRSESDQPQNPAEEILFEILNRLFPNMPIKLDSDFFDDLGGHSLLAAVLISNLREHAEYSHLTIQNLYQARRVGAIAALMLEQPEPTLFDSQIGQDNPRNQTYKWLCGIAQLVTIPVLISINILQWLAPFFTYHYFTGGTRDSIPYAIALSLLVYVSVIMSSFVLSITVKRLLMLGIGAGRYPLWGLTYFRWWLADRISNISPVYLLSGSTLLNLYLKALGAKIGHDVTISSVHIRMPSLLTIEDGVSIGSQVNLENAKVEHGHLVLGSIHLKQDSYVGSYAVLEENTVLEKQAHVNALTSIEYDTVVPEGEIWDGTPAQKIGHIDEQAKLPERPKLSFIRKIAEYGYYGVSALIIACLFFIPIFPSFLLVDWLDVNVFNINPNNHLQIALYYFILAIPASAMMMMITAVISSGLRKIALPRLEIGTYAVHGSTYYRKWFAAQILETSLQTLHGLFATIYAPTWFRMLGAKVGKNTEISTATGVIPEMLTLGEESFIADAVMLGDEEIKGGWMSLKATKIGNRSFVGNSAYIADGTVLPDNVLIGVQSKTPDNREMYDGQTWFGSPALLLPAREAAEKYPDHLTFKPSIKRRLMRGFIEGLRIVLPAALAIGVGYMIVLDVIDVINNYNIETGLVALTLAGLLYGVGCFLIVALLKWILIGRYQPRSAPMWTMFVWLSEGITSLYESVAIPNFLNYLRGTPMLPFFLRILGVRIGKDVYMDTADITEFDCVSIGDRAEFNSFSGPQTHLFEDRIMKIGQVNVGNDVVVNTRSIILYNANVSNHAVLGPLTLVMKGENIPAKSAWIGSPAVPWVHK.

3 residues coordinate L-ornithine: D217, E221, and T304. D-ornithine-binding residues include E221, T304, G306, and T308. L-ornithine contacts are provided by V312 and S313. Residue S313 coordinates D-ornithine. In terms of domain architecture, Carrier spans 524–601; sequence QPQNPAEEIL…AIAALMLEQP (78 aa). S560 is modified (O-(pantetheine 4'-phosphoryl)serine). Transmembrane regions (helical) follow at residues 629-649, 664-684, 868-888, 908-928, 1120-1140, and 1151-1171; these read LVTIPVLISINILQWLAPFFT, AIALSLLVYVSVIMSSFVLSI, VSALIIACLFFIPIFPSFLLV, LYYFILAIPASAMMMMITAVI, IVLPAALAIGVGYMIVLDVID, and LVALTLAGLLYGVGCFLIVAL.

Belongs to the ATP-dependent AMP-binding enzyme family. Pantetheine 4'-phosphate serves as cofactor.

The protein localises to the cell membrane. The enzyme catalyses n L-ornithine + n ATP + H2O = N(5)-(L-ornithyl)-[N(5)-(L-ornithyl)]n-1 + n AMP + n diphosphate + n H(+). It carries out the reaction n D-ornithine + n ATP + H2O = N(5)-(D-ornithyl)-[N(5)-(D-ornithyl)]n-1 + n AMP + n diphosphate + n H(+). Functionally, catalyzes the polymerization of L-ornithine, generating poly-L-ornithine composed of 7-12 amino acid units joined via isopeptide bonds between the carboxylate and the side chain amine. This polymer exhibits potent antifungal activity and thus may have a potential role in survival benefit for A.baumannii. The reaction occurs via ATP-dependent adenylation of the substrate. Can also adenylate D-ornithine with similar efficiency and thus may produce D-ornithine polymers. The sequence is that of Delta-poly-L-ornithine synthetase from Acinetobacter baumannii (strain AB307-0294).